We begin with the raw amino-acid sequence, 140 residues long: Large-conductance mechanosensitive channel 2 (140 aa).

The next 3 membrane-spanning stretches (helical) occupy residues 8–28, 30–50, and 81–101; these read FISKGNVMDLAVGVIIGAAFG, IVDSLVNDIIMPVIGAIFGGL, and GSFITVALNFVILAFIIFLMV.

This sequence belongs to the MscL family. In terms of assembly, homopentamer.

It is found in the cell inner membrane. Functionally, channel that opens in response to stretch forces in the membrane lipid bilayer. May participate in the regulation of osmotic pressure changes within the cell. This is Large-conductance mechanosensitive channel 2 from Mesorhizobium japonicum (strain LMG 29417 / CECT 9101 / MAFF 303099) (Mesorhizobium loti (strain MAFF 303099)).